The chain runs to 262 residues: MVRGPKKHLKRVAAPHHWLLDKLSGTYAPKPSPGPHKARECLPLIVFLRNRLKYALNGREVKAILMQRLIKVDGKVRTDSTFPTGFMDVISVEKTGEHFRLVYDIKGRFTVHRITAEEAKYKLCKVKRVQLGAKGVPFLVTHDGRTIRYPDPLIKVNDTIKLNLETNKIESFIKFDTSAQVMVTGGRNMGRVGTIVHREHHLGSFEIIHVKDALDREFATRLSNVFVIGETGKSWISLPKGKGVKLSITEERDRRRALKGLA.

One can recognise an S4 RNA-binding domain in the interval 42 to 105; sequence LPLIVFLRNR…GEHFRLVYDI (64 aa).

It belongs to the eukaryotic ribosomal protein eS4 family. Component of the small ribosomal subunit (SSU). Mature yeast ribosomes consist of a small (40S) and a large (60S) subunit. The 40S small subunit contains 1 molecule of ribosomal RNA (18S rRNA) and at least 33 different proteins. The large 60S subunit contains 3 rRNA molecules (25S, 5.8S and 5S rRNA) and at least 46 different proteins.

It is found in the cytoplasm. Functionally, component of the ribosome, a large ribonucleoprotein complex responsible for the synthesis of proteins in the cell. The small ribosomal subunit (SSU) binds messenger RNAs (mRNAs) and translates the encoded message by selecting cognate aminoacyl-transfer RNA (tRNA) molecules. The large subunit (LSU) contains the ribosomal catalytic site termed the peptidyl transferase center (PTC), which catalyzes the formation of peptide bonds, thereby polymerizing the amino acids delivered by tRNAs into a polypeptide chain. The nascent polypeptides leave the ribosome through a tunnel in the LSU and interact with protein factors that function in enzymatic processing, targeting, and the membrane insertion of nascent chains at the exit of the ribosomal tunnel. This is Small ribosomal subunit protein eS4A (rps401) from Schizosaccharomyces pombe (strain 972 / ATCC 24843) (Fission yeast).